The following is a 206-amino-acid chain: Sec-independent protein translocase protein TatB (206 aa).

Residues 1–21 form a helical membrane-spanning segment; the sequence is MFDIGWTELLVIAVVLIVVVG. The tract at residues 104 to 206 is disordered; sequence ENKTEVPSAA…VQTKKKKDEA (103 aa). The span at 110-124 shows a compositional bias: low complexity; sequence PSAAMSAPTPSMSLP. Residues 125–138 show a composition bias toward pro residues; that stretch reads ETPPVVPTPAPAPE. Low complexity-rich tracts occupy residues 139-151 and 187-196; these read PAAV…AAKP and ARKPAAPKTP.

This sequence belongs to the TatB family. The Tat system comprises two distinct complexes: a TatABC complex, containing multiple copies of TatA, TatB and TatC subunits, and a separate TatA complex, containing only TatA subunits. Substrates initially bind to the TatABC complex, which probably triggers association of the separate TatA complex to form the active translocon.

It localises to the cell inner membrane. Its function is as follows. Part of the twin-arginine translocation (Tat) system that transports large folded proteins containing a characteristic twin-arginine motif in their signal peptide across membranes. Together with TatC, TatB is part of a receptor directly interacting with Tat signal peptides. TatB may form an oligomeric binding site that transiently accommodates folded Tat precursor proteins before their translocation. The sequence is that of Sec-independent protein translocase protein TatB from Rhizobium etli (strain ATCC 51251 / DSM 11541 / JCM 21823 / NBRC 15573 / CFN 42).